The following is a 97-amino-acid chain: Large ribosomal subunit protein bL36m (97 aa).

The protein belongs to the bacterial ribosomal protein bL36 family. Component of the mitochondrial ribosome large subunit (39S) which comprises a 16S rRNA and about 50 distinct proteins.

The protein resides in the mitochondrion. This chain is Large ribosomal subunit protein bL36m (Mrpl36), found in Rattus norvegicus (Rat).